Reading from the N-terminus, the 512-residue chain is Glutamyl-tRNA(Gln) amidotransferase subunit A (512 aa).

Residues Lys82 and Ser157 each act as charge relay system in the active site. Catalysis depends on Ser181, which acts as the Acyl-ester intermediate.

It belongs to the amidase family. GatA subfamily. In terms of assembly, heterotrimer of A, B and C subunits.

The catalysed reaction is L-glutamyl-tRNA(Gln) + L-glutamine + ATP + H2O = L-glutaminyl-tRNA(Gln) + L-glutamate + ADP + phosphate + H(+). In terms of biological role, allows the formation of correctly charged Gln-tRNA(Gln) through the transamidation of misacylated Glu-tRNA(Gln) in organisms which lack glutaminyl-tRNA synthetase. The reaction takes place in the presence of glutamine and ATP through an activated gamma-phospho-Glu-tRNA(Gln). This Bordetella petrii (strain ATCC BAA-461 / DSM 12804 / CCUG 43448) protein is Glutamyl-tRNA(Gln) amidotransferase subunit A.